Reading from the N-terminus, the 508-residue chain is MAWLVLSGILLCMLGAGLGTSDLEDVLPPAPHNCPDICICAADVLSCAGRGLQDLPVALPTTAAELDLSHNALKRLHPGWLAPLSRLRALHLGYNKLEVLGHGAFTNASGLRTLDLSSNMLRMLHTHDLDGLEELEKLLLFNNSLMHLDLDAFQGLRMLSHLYLSCNELSSFSFNHLHGLGLTRLRTLDLSSNWLKHISIPELAALPTYLKNRLYLHNNPLPCDCSLYHLLRRWHQRGLSALHDFEREYTCLVFKVSESRVRFFEHSRVFKNCSVAAAPGLELPEEQLHAQVGQSLRLFCNTSVPATRVAWVSPKNELLVAPASQDGSIAVLADGSLAIGRVQEQHAGVFVCLASGPRLHHNQTLEYNVSVQKARPEPETFNTGFTTLLGCIVGLVLVLLYLFAPPCRGCCHCCQRACRNRCWPRASSPLQELSAQSSMLSTTPPDAPSRKASVHKHVVFLEPGKKGLNGRVQLAVAEDFDLCNPMGLQLKAGSESASSTGSEGLVMS.

Residues 1–19 form the signal peptide; sequence MAWLVLSGILLCMLGAGLG. Topologically, residues 20–383 are extracellular; that stretch reads TSDLEDVLPP…ARPEPETFNT (364 aa). In terms of domain architecture, LRRNT spans 25 to 61; that stretch reads DVLPPAPHNCPDICICAADVLSCAGRGLQDLPVALPT. 2 disulfide bridges follow: C34–C40 and C38–C47. 6 LRR repeats span residues 62 to 83, 86 to 107, 110 to 133, 134 to 155, 158 to 178, and 184 to 207; these read TAAE…WLAP, RLRA…AFTN, GLRT…DGLE, ELEK…AFQG, MLSH…NHLH, and RLRT…AALP. Residue N107 is glycosylated (N-linked (GlcNAc...) asparagine). N-linked (GlcNAc...) asparagine glycosylation is present at N142. One can recognise an LRRCT domain in the interval 219–275; sequence NPLPCDCSLYHLLRRWHQRGLSALHDFEREYTCLVFKVSESRVRFFEHSRVFKNCSV. Intrachain disulfides connect C223–C251, C225–C273, and C300–C352. N-linked (GlcNAc...) asparagine glycans are attached at residues N272, N301, N362, and N368. In terms of domain architecture, Ig-like C2-type spans 279-370; sequence PGLELPEEQL…HNQTLEYNVS (92 aa). Residues 384–404 form a helical membrane-spanning segment; the sequence is GFTTLLGCIVGLVLVLLYLFA. Residues 405–508 lie on the Cytoplasmic side of the membrane; that stretch reads PPCRGCCHCC…STGSEGLVMS (104 aa).

The protein belongs to the immunoglobulin superfamily. AMIGO family. As to quaternary structure, binds AMIGO1 or AMIGO2. In terms of tissue distribution, ubiquitous.

It is found in the membrane. Its function is as follows. May mediate heterophilic cell-cell interaction. May contribute to signal transduction through its intracellular domain. In Mus musculus (Mouse), this protein is Amphoterin-induced protein 3.